The primary structure comprises 547 residues: Chaperonin GroEL 2 (547 aa).

Residues 30-33 (TLGP), K51, 87-91 (DGTTT), G415, 479-481 (NAA), and D495 each bind ATP. The interval 526 to 547 (KEESAAPAGGGMGGMGGMGGMM) is disordered. The span at 533–547 (AGGGMGGMGGMGGMM) shows a compositional bias: gly residues.

This sequence belongs to the chaperonin (HSP60) family. Forms a cylinder of 14 subunits composed of two heptameric rings stacked back-to-back. Interacts with the co-chaperonin GroES.

The protein localises to the cytoplasm. It catalyses the reaction ATP + H2O + a folded polypeptide = ADP + phosphate + an unfolded polypeptide.. Its function is as follows. Together with its co-chaperonin GroES, plays an essential role in assisting protein folding. The GroEL-GroES system forms a nano-cage that allows encapsulation of the non-native substrate proteins and provides a physical environment optimized to promote and accelerate protein folding. This is Chaperonin GroEL 2 from Anaeromyxobacter sp. (strain Fw109-5).